Reading from the N-terminus, the 213-residue chain is NADH-quinone oxidoreductase subunit I (213 aa).

4Fe-4S ferredoxin-type domains lie at 74–103 and 113–142; these read RFIE…METS and GNYS…HGTE. [4Fe-4S] cluster is bound by residues Cys-83, Cys-86, Cys-89, Cys-93, Cys-122, Cys-125, Cys-128, and Cys-132.

The protein belongs to the complex I 23 kDa subunit family. In terms of assembly, NDH-1 is composed of 14 different subunits. Subunits NuoA, H, J, K, L, M, N constitute the membrane sector of the complex. Requires [4Fe-4S] cluster as cofactor.

The protein localises to the cell inner membrane. It catalyses the reaction a quinone + NADH + 5 H(+)(in) = a quinol + NAD(+) + 4 H(+)(out). Its function is as follows. NDH-1 shuttles electrons from NADH, via FMN and iron-sulfur (Fe-S) centers, to quinones in the respiratory chain. The immediate electron acceptor for the enzyme in this species is believed to be ubiquinone. Couples the redox reaction to proton translocation (for every two electrons transferred, four hydrogen ions are translocated across the cytoplasmic membrane), and thus conserves the redox energy in a proton gradient. The chain is NADH-quinone oxidoreductase subunit I from Campylobacter jejuni subsp. jejuni serotype O:6 (strain 81116 / NCTC 11828).